Reading from the N-terminus, the 892-residue chain is MSILNKVLSKIIGSRNDRFIKVLYKTVDKITELESKMQALSDEQLKSKTQEFKDRINNKETLDSILVEAFAVIRETSTRVLDLRHHDVQLIGGMVLNDGNIAEMGTGEGKTLVATLPAYLNALSGKGVHIVTVNDYLATRDAQWMGKVFDFLGMSVGVIVSNMAHEDKQSAYLCDIAYATNNELGFDYLRDNMAFTSEQKVQRILNFAIVDEVDSILIDEARTPLIISGPVDDYAQIYQTINHMIPNFTKQIENGEGKEIVIEVAGDYTVDEKHKQVFLTDDGHGKAEHLLIDAEALPEGVSLYDASNILLMQHINSALRAHILFQKDVDYIVQDDEVVIVDEFTGRTMPGRRWSEGLHQAIEAKEGVSIKKENQTLASITFQNYFRLYTTLSGMTGTADTEAVEFQDIYGLETLVVPPNKPSARADKSDKIYLTTQEKFEAIAFDVANCQQIGQPVLVGTSSIENSELISTLLEKNNIKHEVLNAKQHEREAIIIANAGSIGAVTIATNMAGRGTDIVLGGKLSEEATDKQKVDWKIQHDDVIKAGGLHIVGTERNESRRVDNQLRGRAARQGDVGSTRFYLSLEDNLMRIFASKKMASMMQKLGMEKGEAIEHKMVNRAIENAQRKVEGMNYDARKHLLEYDDVASDQRKVIYQLRDDLMSVSDVQDRFISIRVKVIEQFFADYISAELMEEDWDVEGLHNALKLDYSADFPLKQWLDEGIDIDELQLRIIQGLSTICDHKEKIVGTKPMREFEKSVMLQTLDHYWKEHLAAMDYLRKSVNLRGYVQKNPTQEYKHESFAMFTSMLDTINIEIVKSLSSVTINENTNVSDVEQENNEGVQVQHEEVETLGVNDAELEIAKQNKFQKRKKKVGRNDPCSCGSGKKYKKCHG.

ATP is bound by residues Q89, 107–111 (GEGKT), and D517. 4 residues coordinate Zn(2+): C879, C881, C890, and H891.

Belongs to the SecA family. In terms of assembly, monomer and homodimer. Part of the essential Sec protein translocation apparatus which comprises SecA, SecYEG and auxiliary proteins SecDF-YajC and YidC. The cofactor is Zn(2+).

It is found in the cell inner membrane. It localises to the cytoplasm. It catalyses the reaction ATP + H2O + cellular proteinSide 1 = ADP + phosphate + cellular proteinSide 2.. Functionally, part of the Sec protein translocase complex. Interacts with the SecYEG preprotein conducting channel. Has a central role in coupling the hydrolysis of ATP to the transfer of proteins into and across the cell membrane, serving as an ATP-driven molecular motor driving the stepwise translocation of polypeptide chains across the membrane. This Ruthia magnifica subsp. Calyptogena magnifica protein is Protein translocase subunit SecA.